Consider the following 404-residue polypeptide: Keratin, type I cuticular Ha3-I (404 aa).

A head region spans residues 1 to 56 (MSYSCGLPSLSCRTSCSSRPCVPPSCHGCTLPGACNIPANVSNCNWFCEGSFNGSE). An IF rod domain is found at 56-367 (EKETMQFLND…SLLESEDCKL (312 aa)). The coil 1A stretch occupies residues 57-91 (KETMQFLNDRLASYLEKVRQLERDNAELENLIRER). Residues 92-102 (SQQQEPLVCAS) are linker 1. A coil 1B region spans residues 103–203 (YQSYFKTIEE…HEQEVNTLRC (101 aa)). The interval 204-219 (QLGDRLNVEVDAAPTV) is linker 12. Residues 220–363 (DLNQVLNETR…NTYRSLLESE (144 aa)) form a coil 2 region. A tail region spans residues 364-404 (DCKLPSNPCATTNACDKSTGPCISNPCGLRARCGPCNTFGY).

This sequence belongs to the intermediate filament family. In terms of tissue distribution, expressed in the hair follicles.

The polypeptide is Keratin, type I cuticular Ha3-I (KRT33A) (Homo sapiens (Human)).